Reading from the N-terminus, the 261-residue chain is Probable pectin methylesterase CGR2 (261 aa).

Over 1–35 the chain is Cytoplasmic; the sequence is MARRQVGSTRRVGDGGSFPFAGALHSKSRSSPLLS. Residues 36 to 56 traverse the membrane as a helical segment; that stretch reads ICLVLVGACLLIGYAYSGPGI. The Lumenal segment spans residues 57–261; it reads FKSIKEVSKV…CQVFHLKPLH (205 aa). N-linked (GlcNAc...) asparagine glycosylation is present at asparagine 174.

The protein belongs to the class I-like SAM-binding methyltransferase superfamily.

It localises to the golgi apparatus membrane. Its function is as follows. Together with CGR3, required for homogalacturonan pectins (HG) methylesterification in the Golgi apparatus prior to integration into cell walls, essential for general growth and development. Promotes rosette growth. Impacts carbon (C) partitioning, photosynthesis and respiration efficiency by influencing leaf mesophyll cell walls morphology and physiology; pectin methylesterification modulates both expansion and positioning of cells in leaves, probably by changing cell walls plasticity. In Arabidopsis thaliana (Mouse-ear cress), this protein is Probable pectin methylesterase CGR2.